The following is a 100-amino-acid chain: MTPWFLYLIRTADNKLYTGITTDVERRYQQHQSGKGAKALRGKGELTLAFSAPVGNRSLALRAEYRVKQLTKRQKERLVAEGAVFAELLNSLQTPEIKSD.

The 76-residue stretch at Thr-2–Arg-77 folds into the GIY-YIG domain.

This sequence belongs to the UPF0213 family.

In Escherichia coli O127:H6 (strain E2348/69 / EPEC), this protein is UPF0213 protein YhbQ.